A 451-amino-acid chain; its full sequence is Protein FAM117A (451 aa).

The segment covering 1–25 (MSGAAAGGRGGGSWGPGRGGAGGLR) has biased composition (gly residues). 2 disordered regions span residues 1 to 83 (MSGA…RPQP) and 164 to 183 (RTKL…VQGD). Serine 29 and serine 67 each carry phosphoserine. Positions 149 to 175 (TDHRKEITKLKQQLQRTKLSRSGKEKE) form a coiled coil. Serine 193 and serine 213 each carry phosphoserine. A disordered region spans residues 242-293 (DGHRAPAPPQNSSCDHSLLLEPGNLTSSPSVPLASPQPPSQASREEHQGATE). Serine 318 and serine 326 each carry phosphoserine. A Phosphothreonine modification is found at threonine 353. The tract at residues 403-451 (SPGSPLPTASPRAPRKGPEASKASSLPSEPWQRSPPSEESVLFQSSLVV) is disordered. 2 positions are modified to phosphoserine: serine 412 and serine 426. Over residues 436–451 (SPPSEESVLFQSSLVV) the composition is skewed to polar residues.

This sequence belongs to the FAM117 family.

This is Protein FAM117A (Fam117a) from Mus musculus (Mouse).